A 320-amino-acid polypeptide reads, in one-letter code: Probable arabinan endo-1,5-alpha-L-arabinosidase C (320 aa).

A signal peptide spans 1–16 (MYRSTLLFLFIALVNA). The active-site Proton acceptor is the D31. N-linked (GlcNAc...) asparagine glycosylation is found at N73, N137, and N191. The active-site Proton donor is the E199.

Belongs to the glycosyl hydrolase 43 family.

Its subcellular location is the secreted. It carries out the reaction Endohydrolysis of (1-&gt;5)-alpha-arabinofuranosidic linkages in (1-&gt;5)-arabinans.. It participates in glycan metabolism; L-arabinan degradation. Endo-1,5-alpha-L-arabinanase involved in degradation of pectin. Its preferred substrate is linear 1,5-alpha-L-arabinan. This is Probable arabinan endo-1,5-alpha-L-arabinosidase C (abnC) from Aspergillus terreus (strain NIH 2624 / FGSC A1156).